Reading from the N-terminus, the 1372-residue chain is Disease resistance protein RRS1B (1372 aa).

One can recognise a TIR domain in the interval 2-137; that stretch reads TESEQIVYIS…ETVRDVYEKL (136 aa). Residues 166–417 enclose the NB-ARC domain; the sequence is VGIWGMPGIG…GCGFFPHVGI (252 aa). 170–177 contacts ATP; it reads GMPGIGKT. Residues 491-515 form an LRR 1 repeat; the sequence is PEEIEGMFLDTSNLSFDIKHVAFDN. An LRR 2; degenerate repeat occupies 528-544; sequence NPEVHHVNNFLKGSLSS. 10 LRR repeats span residues 545–568, 570–591, 614–637, 638–658, 659–681, 693–718, 723–747, 749–767, 768–792, and 798–823; these read LPNV…NFDP, HLVE…TKDL, AQNL…TGQL, LHLR…PEIP, PNIE…IVKP, IPGL…KIST, PGKL…VNLE, LKAL…QGFP, RNLK…SLEF, and CVSL…CFDL. Positions 950-964 match the Nuclear localization signal motif; it reads INLHCWALGKAVERD. The WRKY DNA-binding region spans 1174–1240; sequence DRGSRSSDLW…YISEHNHPFP (67 aa). Disordered stretches follow at residues 1246 to 1288 and 1337 to 1372; these read LAGS…ASPP and QTMF…ILNR. Residues 1249 to 1269 show a composition bias toward low complexity; sequence STRSSSSKCSDVTTSASSTVS. Residues 1270-1279 are compositionally biased toward basic and acidic residues; it reads QDKEGPDKSH. Over residues 1337–1348 the composition is skewed to polar residues; it reads QTMFLSRRSSGG.

It belongs to the disease resistance TIR-NB-LRR family. As to quaternary structure, interacts with RPS4B. RPS4B-RRS1B heterodimer interacts with the bacterial effectors AvrRps4 and PopP2.

Its subcellular location is the nucleus. Its function is as follows. Transcription factor. Interacts specifically with the W box (5'-(T)TGAC[CT]-3'), a frequently occurring elicitor-responsive cis-acting element. Also acts as a disease resistance protein that specifically recognizes the AvrRps4 type III effector avirulence protein from P.syringae. Heterodimerization with RPS4B is required to form a functional complex to recognize AvrRps4 and to mediate the hypersensitive response. This is Disease resistance protein RRS1B from Arabidopsis thaliana (Mouse-ear cress).